A 218-amino-acid polypeptide reads, in one-letter code: Adenylate kinase (218 aa).

ATP is bound at residue 10–15 (GAGKGT). Positions 30–59 (STGDMLRAAVKAGTPLGLEAKKVMDAGGLV) are NMP. AMP-binding positions include Thr-31, Arg-36, 57–59 (GLV), 85–88 (GFPR), and Gln-92. The LID stretch occupies residues 122–159 (GRRVHVASGRTYHVKFNPPKVAGKDDETGEDLIQRADD). Residues Arg-123 and 132–133 (TY) each bind ATP. Residues Arg-156 and Arg-167 each contribute to the AMP site. Gly-203 provides a ligand contact to ATP.

The protein belongs to the adenylate kinase family. Monomer.

It is found in the cytoplasm. The catalysed reaction is AMP + ATP = 2 ADP. It functions in the pathway purine metabolism; AMP biosynthesis via salvage pathway; AMP from ADP: step 1/1. In terms of biological role, catalyzes the reversible transfer of the terminal phosphate group between ATP and AMP. Plays an important role in cellular energy homeostasis and in adenine nucleotide metabolism. This is Adenylate kinase from Laribacter hongkongensis (strain HLHK9).